Consider the following 365-residue polypeptide: Peptide chain release factor 2 (365 aa).

At Q249 the chain carries N5-methylglutamine.

Belongs to the prokaryotic/mitochondrial release factor family. Methylated by PrmC. Methylation increases the termination efficiency of RF2.

Its subcellular location is the cytoplasm. Its function is as follows. Peptide chain release factor 2 directs the termination of translation in response to the peptide chain termination codons UGA and UAA. In Acholeplasma laidlawii (strain PG-8A), this protein is Peptide chain release factor 2.